The following is a 173-amino-acid chain: Photosystem I assembly protein Ycf3 (173 aa).

TPR repeat units lie at residues 35–68 (AFAY…EDDP), 72–105 (SYIL…NPRM), and 120–153 (GEKA…APNN).

This sequence belongs to the Ycf3 family.

It is found in the cellular thylakoid membrane. Functionally, essential for the assembly of the photosystem I (PSI) complex. May act as a chaperone-like factor to guide the assembly of the PSI subunits. The polypeptide is Photosystem I assembly protein Ycf3 (Picosynechococcus sp. (strain ATCC 27264 / PCC 7002 / PR-6) (Agmenellum quadruplicatum)).